Reading from the N-terminus, the 484-residue chain is Nuclear rim protein 1 (484 aa).

The residue at position 3 (serine 3) is a Phosphoserine. Helical transmembrane passes span 145 to 165 (FTIF…MFGY) and 237 to 257 (IPTN…IVFL). The segment at 416–457 (SSNENLEKGGAFLPNQDQNRPSKSLSPLRKTPLSARQKRFEG) is disordered. Serine 417 bears the Phosphoserine mark. Residues 430–440 (NQDQNRPSKSL) are compositionally biased toward polar residues. At serine 474 the chain carries Phosphoserine.

This sequence belongs to the NUR1 family. Interacts with CSM1.

It localises to the nucleus membrane. In terms of biological role, member of a perinuclear network that controls recombination at multiple loci to maintain genome stability. Required for rDNA repeat stability. This chain is Nuclear rim protein 1 (NUR1), found in Saccharomyces cerevisiae (strain JAY291) (Baker's yeast).